The sequence spans 442 residues: Probable 6-phospho-beta-glucosidase (442 aa).

NAD(+) is bound at residue 5-73; that stretch reads LKIVTIGGGS…VPIDIHLTLD (69 aa). 2 residues coordinate substrate: Arg-96 and Asn-150. Mn(2+) is bound by residues Cys-172 and His-202. The active-site Proton acceptor is the Tyr-256.

The protein belongs to the glycosyl hydrolase 4 family. NAD(+) serves as cofactor. A divalent metal cation is required as a cofactor.

It catalyses the reaction 6-phospho-beta-D-glucosyl-(1-&gt;4)-D-glucose + H2O = D-glucose 6-phosphate + D-glucose. Hydrolyzes phospho-beta-glucosides. This Bacillus subtilis (strain 168) protein is Probable 6-phospho-beta-glucosidase (licH).